The following is a 193-amino-acid chain: Holliday junction branch migration complex subunit RuvA (193 aa).

Residues 1–64 (MIGRIAGILL…EDAHLLYGFL (64 aa)) are domain I. Positions 65 to 139 (TPQERTTFRE…GKLGADLGAL (75 aa)) are domain II. Residues 139-143 (LAGAA) are flexible linker. Residues 144-193 (SQSDHATDILNALVALGYSEKEGLAAIKNVPAGTGVSEGIKLALKALSKV) are domain III.

Belongs to the RuvA family. In terms of assembly, homotetramer. Forms an RuvA(8)-RuvB(12)-Holliday junction (HJ) complex. HJ DNA is sandwiched between 2 RuvA tetramers; dsDNA enters through RuvA and exits via RuvB. An RuvB hexamer assembles on each DNA strand where it exits the tetramer. Each RuvB hexamer is contacted by two RuvA subunits (via domain III) on 2 adjacent RuvB subunits; this complex drives branch migration. In the full resolvosome a probable DNA-RuvA(4)-RuvB(12)-RuvC(2) complex forms which resolves the HJ.

The protein resides in the cytoplasm. Functionally, the RuvA-RuvB-RuvC complex processes Holliday junction (HJ) DNA during genetic recombination and DNA repair, while the RuvA-RuvB complex plays an important role in the rescue of blocked DNA replication forks via replication fork reversal (RFR). RuvA specifically binds to HJ cruciform DNA, conferring on it an open structure. The RuvB hexamer acts as an ATP-dependent pump, pulling dsDNA into and through the RuvAB complex. HJ branch migration allows RuvC to scan DNA until it finds its consensus sequence, where it cleaves and resolves the cruciform DNA. The chain is Holliday junction branch migration complex subunit RuvA from Burkholderia ambifaria (strain MC40-6).